The chain runs to 193 residues: AP-3 complex subunit sigma-2 (193 aa).

The protein belongs to the adaptor complexes small subunit family. In terms of assembly, adaptor protein complex 3 (AP-3) is a heterotetramer composed of two large adaptins (delta-type subunit AP3D1 and beta-type subunit AP3B1 or AP3B2), a medium adaptin (mu-type subunit AP3M1 or AP3M2) and a small adaptin (sigma-type subunit APS1 or AP3S2). Interacts with AGAP1. AP-3 associates with the BLOC-1 complex. In terms of tissue distribution, present in all adult tissues examined.

It localises to the golgi apparatus. It is found in the cytoplasmic vesicle membrane. Part of the AP-3 complex, an adaptor-related complex which is not clathrin-associated. The complex is associated with the Golgi region as well as more peripheral structures. It facilitates the budding of vesicles from the Golgi membrane and may be directly involved in trafficking to lysosomes. In concert with the BLOC-1 complex, AP-3 is required to target cargos into vesicles assembled at cell bodies for delivery into neurites and nerve terminals. The sequence is that of AP-3 complex subunit sigma-2 (AP3S2) from Homo sapiens (Human).